A 287-amino-acid polypeptide reads, in one-letter code: Urease accessory protein UreD (287 aa).

This sequence belongs to the UreD family. In terms of assembly, ureD, UreF and UreG form a complex that acts as a GTP-hydrolysis-dependent molecular chaperone, activating the urease apoprotein by helping to assemble the nickel containing metallocenter of UreC. The UreE protein probably delivers the nickel.

It localises to the cytoplasm. Functionally, required for maturation of urease via the functional incorporation of the urease nickel metallocenter. The polypeptide is Urease accessory protein UreD (Aliivibrio fischeri (strain MJ11) (Vibrio fischeri)).